A 346-amino-acid chain; its full sequence is Methionine import ATP-binding protein MetN 1 (346 aa).

Positions 2 to 241 constitute an ABC transporter domain; it reads IELKNVSKVF…PQHVTTKKFV (240 aa). 38–45 contacts ATP; the sequence is GYSGAGKS.

This sequence belongs to the ABC transporter superfamily. Methionine importer (TC 3.A.1.24) family. As to quaternary structure, the complex is composed of two ATP-binding proteins (MetN), two transmembrane proteins (MetI) and a solute-binding protein (MetQ).

It localises to the cell membrane. It carries out the reaction L-methionine(out) + ATP + H2O = L-methionine(in) + ADP + phosphate + H(+). The catalysed reaction is D-methionine(out) + ATP + H2O = D-methionine(in) + ADP + phosphate + H(+). In terms of biological role, part of the ABC transporter complex MetNIQ involved in methionine import. Responsible for energy coupling to the transport system. This chain is Methionine import ATP-binding protein MetN 1, found in Bacillus cereus (strain ATCC 14579 / DSM 31 / CCUG 7414 / JCM 2152 / NBRC 15305 / NCIMB 9373 / NCTC 2599 / NRRL B-3711).